The sequence spans 59 residues: Venom protein 27.7 (59 aa).

The signal sequence occupies residues 1 to 29 (MTFITLTIGLSLRTIFLIFIFLPPPHLLA).

It belongs to the non-disulfide-bridged peptide (NDBP) superfamily. Expressed by the venom gland.

The protein resides in the secreted. This chain is Venom protein 27.7, found in Lychas mucronatus (Chinese swimming scorpion).